The sequence spans 182 residues: Small ribosomal subunit protein uS4c (182 aa).

Residues 12 to 31 (PGFTSKRPRSGSDLKNPLRS) form a disordered region. The S4 RNA-binding domain occupies 82–143 (MRLDNILFRL…KQRSKALIQN (62 aa)).

The protein belongs to the universal ribosomal protein uS4 family. In terms of assembly, part of the 30S ribosomal subunit. Contacts protein S5. The interaction surface between S4 and S5 is involved in control of translational fidelity.

It is found in the plastid. The protein localises to the chloroplast. Its function is as follows. One of the primary rRNA binding proteins, it binds directly to 16S rRNA where it nucleates assembly of the body of the 30S subunit. Functionally, with S5 and S12 plays an important role in translational accuracy. The chain is Small ribosomal subunit protein uS4c (rps4) from Hymenocallis littoralis (Beach spider-lily).